Here is a 90-residue protein sequence, read N- to C-terminus: Sakacin-A immunity factor (90 aa).

Functionally, imparts immunity to sakacin-A to naturally sensitive host strains. The chain is Sakacin-A immunity factor (saiA) from Latilactobacillus sakei (Lactobacillus sakei).